The primary structure comprises 385 residues: 1-deoxy-D-xylulose 5-phosphate reductoisomerase (385 aa).

7 residues coordinate NADPH: Thr-10, Gly-11, Ser-12, Ile-13, Gly-36, Asn-38, and Asn-122. Residue Lys-123 coordinates 1-deoxy-D-xylulose 5-phosphate. Glu-124 is a binding site for NADPH. A Mn(2+)-binding site is contributed by Asp-148. Ser-149, Glu-150, Ser-174, and His-197 together coordinate 1-deoxy-D-xylulose 5-phosphate. Glu-150 lines the Mn(2+) pocket. Gly-203 provides a ligand contact to NADPH. Residues Ser-210, Asn-215, Lys-216, and Glu-219 each coordinate 1-deoxy-D-xylulose 5-phosphate. Position 219 (Glu-219) interacts with Mn(2+).

It belongs to the DXR family. Requires Mg(2+) as cofactor. Mn(2+) serves as cofactor.

The catalysed reaction is 2-C-methyl-D-erythritol 4-phosphate + NADP(+) = 1-deoxy-D-xylulose 5-phosphate + NADPH + H(+). It participates in isoprenoid biosynthesis; isopentenyl diphosphate biosynthesis via DXP pathway; isopentenyl diphosphate from 1-deoxy-D-xylulose 5-phosphate: step 1/6. Catalyzes the NADPH-dependent rearrangement and reduction of 1-deoxy-D-xylulose-5-phosphate (DXP) to 2-C-methyl-D-erythritol 4-phosphate (MEP). This chain is 1-deoxy-D-xylulose 5-phosphate reductoisomerase, found in Citrifermentans bemidjiense (strain ATCC BAA-1014 / DSM 16622 / JCM 12645 / Bem) (Geobacter bemidjiensis).